We begin with the raw amino-acid sequence, 154 residues long: Insulin-like growth factor 1 (154 aa).

The interval 50 to 78 (GPETLCGAELVDALQFVCGDRGFYFNKPT) is b. 3 disulfides stabilise this stretch: cysteine 55–cysteine 97, cysteine 67–cysteine 110, and cysteine 96–cysteine 101. Residues 79–90 (GYGSSSRRAPQT) form a c region. The a stretch occupies residues 91 to 111 (GIVDECCFRSCDLRRLEMYCA). Residues 112–119 (PLKPAKSA) are d. The propeptide at 120-154 (RSVRAQRHTDMPKAQKEVHLKNTSRGSAGNKNYRM) is e peptide. The tract at residues 121–154 (SVRAQRHTDMPKAQKEVHLKNTSRGSAGNKNYRM) is disordered. Over residues 126-139 (RHTDMPKAQKEVHL) the composition is skewed to basic and acidic residues. Positions 140–154 (KNTSRGSAGNKNYRM) are enriched in polar residues.

It belongs to the insulin family. As to quaternary structure, forms a ternary complex with IGFR1 and ITGAV:ITGB3. Forms a ternary complex with IGFR1 and ITGA6:ITGB4. Forms a ternary complex with IGFBP3 and ALS.

The protein localises to the secreted. The insulin-like growth factors, isolated from plasma, are structurally and functionally related to insulin but have a much higher growth-promoting activity. May be a physiological regulator of [1-14C]-2-deoxy-D-glucose (2DG) transport and glycogen synthesis in osteoblasts. Stimulates glucose transport in bone-derived osteoblastic (PyMS) cells and is effective at much lower concentrations than insulin, not only regarding glycogen and DNA synthesis but also with regard to enhancing glucose uptake. May play a role in synapse maturation. Ca(2+)-dependent exocytosis of IGF1 is required for sensory perception of smell in the olfactory bulb. Acts as a ligand for IGF1R. Binds to the alpha subunit of IGF1R, leading to the activation of the intrinsic tyrosine kinase activity which autophosphorylates tyrosine residues in the beta subunit thus initiating a cascade of down-stream signaling events leading to activation of the PI3K-AKT/PKB and the Ras-MAPK pathways. Binds to integrins ITGAV:ITGB3 and ITGA6:ITGB4. Its binding to integrins and subsequent ternary complex formation with integrins and IGFR1 are essential for IGF1 signaling. Induces the phosphorylation and activation of IGFR1, MAPK3/ERK1, MAPK1/ERK2 and AKT1. As part of the MAPK/ERK signaling pathway, acts as a negative regulator of apoptosis in cardiomyocytes via promotion of STUB1/CHIP-mediated ubiquitination and degradation of ICER-type isoforms of CREM. This Bos taurus (Bovine) protein is Insulin-like growth factor 1.